We begin with the raw amino-acid sequence, 203 residues long: SPbeta prophage-derived uncharacterized lipoprotein YonS (203 aa).

Residues 1-21 (MKLFKKLGILLLITSLILLAA) form the signal peptide. Cys-22 carries the N-palmitoyl cysteine lipid modification. Residue Cys-22 is the site of S-diacylglycerol cysteine attachment. The segment covering 27 to 46 (ESSSSSEDTNNATDTNTSES) has biased composition (low complexity). Residues 27–57 (ESSSSSEDTNNATDTNTSESQDISVNGPEKV) are disordered.

Its subcellular location is the cell membrane. This Bacillus subtilis (strain 168) protein is SPbeta prophage-derived uncharacterized lipoprotein YonS (yonS).